Reading from the N-terminus, the 185-residue chain is Translation initiation factor IF-3 (185 aa).

The protein belongs to the IF-3 family. As to quaternary structure, monomer.

It localises to the cytoplasm. In terms of biological role, IF-3 binds to the 30S ribosomal subunit and shifts the equilibrium between 70S ribosomes and their 50S and 30S subunits in favor of the free subunits, thus enhancing the availability of 30S subunits on which protein synthesis initiation begins. The sequence is that of Translation initiation factor IF-3 from Rickettsia felis (strain ATCC VR-1525 / URRWXCal2) (Rickettsia azadi).